We begin with the raw amino-acid sequence, 1019 residues long: Pleckstrin homology domain-containing family M member 2 (1019 aa).

Residue M1 is modified to N-acetylmethionine. Positions 1 to 310 (MEPGEVKDRI…LDPPDACTEL (310 aa)) are interaction with KIF5B. Residues 36 to 158 (RNHDKVLQRL…IRFELDLDAP (123 aa)) enclose the RUN domain. Disordered regions lie at residues 230 to 458 (SVPS…SEGL), 471 to 525 (SPST…REAQ), and 557 to 581 (QPSP…SEMV). Composition is skewed to polar residues over residues 243–272 (DTVS…QNPF) and 279–291 (TVSS…VHTT). Positions 315-327 (VTKKKKIGKKKKS) are enriched in basic residues. Residues 417-427 (LNGQLDPSTWC) are compositionally biased toward polar residues. S441 bears the Phosphoserine mark. Over residues 516-525 (PLEDTTREAQ) the composition is skewed to basic and acidic residues. The interaction with sifA stretch occupies residues 762-885 (PCHCSPPEGT…VIPQGVAPSP (124 aa)). One can recognise a PH domain in the interval 771–873 (TITKEGMLHY…WMQHLCQAVS (103 aa)).

Interacts with KLC2 (via TPR repeats). Interacts with KIF5B. Interacts with BORCS5. Interacts (via RUN domain) with ARL8B (GTP-bound form); PLEKHM1 and PLEKHM2 compete for interaction with ARL8B. Interacts with ARL8A. As to quaternary structure, (Microbial infection) Interacts with the S.typhimurium sifA protein; required for S.typhimurium infection.

It localises to the cytoplasm. The protein localises to the lysosome membrane. In terms of biological role, plays a role in lysosomes movement and localization at the cell periphery acting as an effector of ARL8B. Required for ARL8B to exert its effects on lysosome location, recruits kinesin-1 to lysosomes and hence direct their movement toward microtubule plus ends. Binding to ARL8B provides a link from lysosomal membranes to plus-end-directed motility. Critical factor involved in NK cell-mediated cytotoxicity. Drives the polarization of cytolytic granules and microtubule-organizing centers (MTOCs) toward the immune synapse between effector NK lymphocytes and target cells. Required for maintenance of the Golgi apparatus organization. May play a role in membrane tubulation. This chain is Pleckstrin homology domain-containing family M member 2, found in Homo sapiens (Human).